The sequence spans 484 residues: Glycogen synthase (484 aa).

Position 15 (Lys-15) interacts with ADP-alpha-D-glucose.

It belongs to the glycosyltransferase 1 family. Bacterial/plant glycogen synthase subfamily.

The enzyme catalyses [(1-&gt;4)-alpha-D-glucosyl](n) + ADP-alpha-D-glucose = [(1-&gt;4)-alpha-D-glucosyl](n+1) + ADP + H(+). Its pathway is glycan biosynthesis; glycogen biosynthesis. Functionally, synthesizes alpha-1,4-glucan chains using ADP-glucose. The sequence is that of Glycogen synthase from Geotalea uraniireducens (strain Rf4) (Geobacter uraniireducens).